The sequence spans 402 residues: Heat stress transcription factor A-6a (402 aa).

The interval 1-28 (MLKPQTPRARRAAHPNSHMASSSSSSSL) is disordered. Residues 212-258 (EVVSLKRDRAALRAEVIMLKQQYNACKSQLIAMEEMVRNIERRQQQT) are a coiled coil. The hydrophobic repeat HR-A/B stretch occupies residues 216 to 266 (LKRDRAALRAEVIMLKQQYNACKSQLIAMEEMVRNIERRQQQTIGFFAKVL). Positions 290 to 293 (KRQR) match the Nuclear localization signal motif. Positions 349-358 (DDVWEELDAL) match the AHA motif.

This sequence belongs to the HSF family. Class A subfamily. In terms of assembly, homotrimer. Exhibits temperature-dependent phosphorylation.

It is found in the nucleus. Functionally, transcriptional regulator that specifically binds DNA of heat shock promoter elements (HSE). This is Heat stress transcription factor A-6a (HSFA6B) from Oryza sativa subsp. japonica (Rice).